The following is a 127-amino-acid chain: Large ribosomal subunit protein bL12 (127 aa).

It belongs to the bacterial ribosomal protein bL12 family. As to quaternary structure, homodimer. Part of the ribosomal stalk of the 50S ribosomal subunit. Forms a multimeric L10(L12)X complex, where L10 forms an elongated spine to which 2 to 4 L12 dimers bind in a sequential fashion. Binds GTP-bound translation factors.

Its function is as follows. Forms part of the ribosomal stalk which helps the ribosome interact with GTP-bound translation factors. Is thus essential for accurate translation. This Phytoplasma mali (strain AT) protein is Large ribosomal subunit protein bL12.